Reading from the N-terminus, the 141-residue chain is Inclusion membrane protein D (141 aa).

2 helical membrane passes run 38 to 58 (VAVAVATILAVALLVVAGLLF) and 68 to 88 (VLAASLFFGVGAFLLGGALVG).

It localises to the secreted. The protein localises to the host vacuole. It is found in the host pathogen-containing vacuole. The protein resides in the host pathogen-containing vacuole membrane. Its function is as follows. Inclusion membrane protein probably involved in early modification events of the chlamydial inclusion. This is Inclusion membrane protein D (incD) from Chlamydia trachomatis serovar D (strain ATCC VR-885 / DSM 19411 / UW-3/Cx).